The chain runs to 201 residues: Large ribosomal subunit protein uL4 (201 aa).

Positions 45–75 (AQKSRSEVSGSGKKPWRQKGTGRARSGSLRS) are disordered.

The protein belongs to the universal ribosomal protein uL4 family. In terms of assembly, part of the 50S ribosomal subunit.

In terms of biological role, one of the primary rRNA binding proteins, this protein initially binds near the 5'-end of the 23S rRNA. It is important during the early stages of 50S assembly. It makes multiple contacts with different domains of the 23S rRNA in the assembled 50S subunit and ribosome. Functionally, forms part of the polypeptide exit tunnel. This is Large ribosomal subunit protein uL4 from Buchnera aphidicola subsp. Cinara cedri (strain Cc).